A 92-amino-acid polypeptide reads, in one-letter code: RQC P-site tRNA stabilizing factor (92 aa).

Positions Met-5–Glu-65 constitute an S4 RNA-binding domain.

This sequence belongs to the RqcP family. As to quaternary structure, associates with stalled 50S ribosomal subunits. Binds to RqcH, 23S rRNA and the P-site tRNA. Does not require RqcH for association with 50S subunits.

Key component of the ribosome quality control system (RQC), a ribosome-associated complex that mediates the extraction of incompletely synthesized nascent chains from stalled ribosomes and their subsequent degradation. RqcH recruits Ala-charged tRNA, and with RqcP directs the elongation of stalled nascent chains on 50S ribosomal subunits, leading to non-templated C-terminal alanine extensions (Ala tail). The Ala tail promotes nascent chain degradation. RqcP is associated with the translocation-like movement of the peptidyl-tRNA from the A-site into the P-site. The protein is RQC P-site tRNA stabilizing factor of Listeria monocytogenes serovar 1/2a (strain ATCC BAA-679 / EGD-e).